A 461-amino-acid chain; its full sequence is Bifunctional protein HldE (461 aa).

Positions 1–311 (MKKILVVGDL…EEIALILNQT (311 aa)) are ribokinase. 191-194 (NRAE) serves as a coordination point for ATP. The active site involves aspartate 260. A cytidylyltransferase region spans residues 332-461 (FTNGCFDLLH…IEKIKRTHND (130 aa)).

This sequence in the N-terminal section; belongs to the carbohydrate kinase PfkB family. In the C-terminal section; belongs to the cytidylyltransferase family. As to quaternary structure, homodimer.

The catalysed reaction is D-glycero-beta-D-manno-heptose 7-phosphate + ATP = D-glycero-beta-D-manno-heptose 1,7-bisphosphate + ADP + H(+). It catalyses the reaction D-glycero-beta-D-manno-heptose 1-phosphate + ATP + H(+) = ADP-D-glycero-beta-D-manno-heptose + diphosphate. Its pathway is nucleotide-sugar biosynthesis; ADP-L-glycero-beta-D-manno-heptose biosynthesis; ADP-L-glycero-beta-D-manno-heptose from D-glycero-beta-D-manno-heptose 7-phosphate: step 1/4. It participates in nucleotide-sugar biosynthesis; ADP-L-glycero-beta-D-manno-heptose biosynthesis; ADP-L-glycero-beta-D-manno-heptose from D-glycero-beta-D-manno-heptose 7-phosphate: step 3/4. Its function is as follows. Catalyzes the phosphorylation of D-glycero-D-manno-heptose 7-phosphate at the C-1 position to selectively form D-glycero-beta-D-manno-heptose-1,7-bisphosphate. In terms of biological role, catalyzes the ADP transfer from ATP to D-glycero-beta-D-manno-heptose 1-phosphate, yielding ADP-D-glycero-beta-D-manno-heptose. This is Bifunctional protein HldE from Helicobacter pylori (strain P12).